The following is a 293-amino-acid chain: N-acetylmannosamine kinase (293 aa).

Residues 5-12 and 133-140 each bind ATP; these read AIDIGGTK and GVGGGLVI. Residues His157, Cys167, Cys169, and Cys174 each contribute to the Zn(2+) site.

The protein belongs to the ROK (NagC/XylR) family. NanK subfamily. Homodimer.

It catalyses the reaction an N-acyl-D-mannosamine + ATP = an N-acyl-D-mannosamine 6-phosphate + ADP + H(+). It participates in amino-sugar metabolism; N-acetylneuraminate degradation; D-fructose 6-phosphate from N-acetylneuraminate: step 2/5. Functionally, catalyzes the phosphorylation of N-acetylmannosamine (ManNAc) to ManNAc-6-P. The protein is N-acetylmannosamine kinase of Vibrio vulnificus (strain YJ016).